The chain runs to 204 residues: LexA repressor (204 aa).

Positions 27-47 form a DNA-binding region, H-T-H motif; the sequence is VREIGEAVGLASSSTVHGHLA. Residues S126 and K164 each act as for autocatalytic cleavage activity in the active site.

The protein belongs to the peptidase S24 family. As to quaternary structure, homodimer.

It catalyses the reaction Hydrolysis of Ala-|-Gly bond in repressor LexA.. In terms of biological role, represses a number of genes involved in the response to DNA damage (SOS response), including recA and lexA. In the presence of single-stranded DNA, RecA interacts with LexA causing an autocatalytic cleavage which disrupts the DNA-binding part of LexA, leading to derepression of the SOS regulon and eventually DNA repair. This chain is LexA repressor, found in Listeria welshimeri serovar 6b (strain ATCC 35897 / DSM 20650 / CCUG 15529 / CIP 8149 / NCTC 11857 / SLCC 5334 / V8).